The primary structure comprises 320 residues: Ferrochelatase (320 aa).

His-194 and Glu-275 together coordinate Fe cation.

The protein belongs to the ferrochelatase family. As to quaternary structure, monomer.

The protein localises to the cytoplasm. The enzyme catalyses heme b + 2 H(+) = protoporphyrin IX + Fe(2+). It participates in porphyrin-containing compound metabolism; protoheme biosynthesis; protoheme from protoporphyrin-IX: step 1/1. Its function is as follows. Catalyzes the ferrous insertion into protoporphyrin IX. This Escherichia coli O45:K1 (strain S88 / ExPEC) protein is Ferrochelatase.